The chain runs to 188 residues: Apolipoprotein M (188 aa).

The not cleaved signal peptide spans 1–22 (MFHQIWAALLYFYGIILNSIYQ). 3 disulfide bridges follow: C23/C167, C95/C183, and C128/C157. A glycan (N-linked (GlcNAc...) asparagine) is linked at N135. Tetradecanoate-binding residues include E136 and R143.

It belongs to the calycin superfamily. Lipocalin family. Highly divergent. Interacts with LRP2; LRP2 mediates APOM renal uptake and subsequent lysosomal degradation.

It localises to the secreted. Functionally, probably involved in lipid transport. Can bind sphingosine-1-phosphate, myristic acid, palmitic acid and stearic acid, retinol, all-trans-retinoic acid and 9-cis-retinoic acid. The protein is Apolipoprotein M (APOM) of Pongo abelii (Sumatran orangutan).